The primary structure comprises 147 residues: Large ribosomal subunit protein uL16 (147 aa).

Belongs to the universal ribosomal protein uL16 family. Part of the 50S ribosomal subunit.

Binds 23S rRNA and is also seen to make contacts with the A and possibly P site tRNAs. The chain is Large ribosomal subunit protein uL16 from Clostridium botulinum (strain ATCC 19397 / Type A).